The following is a 238-amino-acid chain: MTSKVGEYEDVPEDESRLTEENVSVPEEEVEDEDEEEDDDDDHIYINEETESGREKVLVSHAPQERIVPPLNFCPVERYLYRSGQPSPVNFPFLLNLKLKTIIWLSNEEPQDTLLEFCDTHRINLQFAAINPDAGEDDNPWDGLTEHSIINVLQTIVTQENYPLLVCCGMGRHRTGTVIGCLRRIMGWNLASVSEEYRRFTGSRGGRILVELLIEAFDTNLVKIDKNKAPSWLLTALE.

The segment at 1–43 (MTSKVGEYEDVPEDESRLTEENVSVPEEEVEDEDEEEDDDDDH) is disordered. Position 2 is an N-acetylthreonine (Thr-2). Ser-24 carries the post-translational modification Phosphoserine. A compositionally biased stretch (acidic residues) spans 26-42 (PEEEVEDEDEEEDDDDD). Positions 72–230 (NFCPVERYLY…LVKIDKNKAP (159 aa)) constitute a Tyrosine-protein phosphatase domain. Residue Cys-168 is the Phosphocysteine intermediate of the active site.

Belongs to the protein-tyrosine phosphatase family.

The protein resides in the cytoplasm. It catalyses the reaction O-phospho-L-tyrosyl-[protein] + H2O = L-tyrosyl-[protein] + phosphate. In terms of biological role, putative tyrosine-protein phosphatase required for protection against superoxide stress. Involved in cell-cycle delay in response to linoleic acid hydroperoxide (LoaOOH). This Saccharomyces cerevisiae (strain YJM789) (Baker's yeast) protein is Putative tyrosine-protein phosphatase OCA1 (OCA1).